Consider the following 126-residue polypeptide: UPF0102 protein BCAN_A0183 (126 aa).

The protein belongs to the UPF0102 family.

In Brucella canis (strain ATCC 23365 / NCTC 10854 / RM-666), this protein is UPF0102 protein BCAN_A0183.